The chain runs to 394 residues: Hemagglutinin-esterase (394 aa).

The N-terminal stretch at 1–16 is a signal peptide; it reads MARFIILFLLLAPVYS. Over 17–347 the chain is Extracellular; it reads RLCLRNHPDT…NNRVDAIPPQ (331 aa). Serine 32 is an active-site residue. Positions 119–121 match the Cell attachment site motif; it reads RGD. Catalysis depends on residues aspartate 261 and histidine 264. Asparagine 333 carries N-linked (GlcNAc...) asparagine; by host glycosylation. The tract at residues 335 to 358 is highly polymorphic region; sequence TDVNNRVDAIPPQLSNIFISMGVA. A helical membrane pass occupies residues 348 to 368; the sequence is LSNIFISMGVAGFGIALFLAG. Topologically, residues 369–394 are cytoplasmic; sequence WKACVWIAAFMYKSRGRNPPANLSVA.

The protein resides in the host membrane. It is found in the virion membrane. It catalyses the reaction N-acetyl-9-O-acetylneuraminate + H2O = N-acetylneuraminate + acetate + H(+). The catalysed reaction is N-acetyl-4-O-acetylneuraminate + H2O = N-acetylneuraminate + acetate + H(+). In terms of biological role, performs attachment to host receptor thereby inducing virus particle entry into target cell. Binds specifically to 5-N-acetyl-4-O-acetyl neuraminic acid on host cells, which plays a major role in cell tropism of the virus. ALso mediates de-O-acetylation of N-acetyl-4-O-acetylneuraminic acid. This receptor-destroying activity is important for virus release as it probably helps preventing self-aggregation and ensures the efficient spread of the progeny virus from cell to cell. The highly polymorphic region (HPR) modulates the virulence in host. Catalyzes the removal of terminal sialic acid residues from viral and cellular glycoconjugates. This Gadus morhua (Atlantic cod) protein is Hemagglutinin-esterase.